The following is an 83-amino-acid chain: Cytochrome b559 subunit alpha (83 aa).

The chain crosses the membrane as a helical span at residues 21 to 35; that stretch reads VIHSITIPSLFIAGW. A heme-binding site is contributed by histidine 23.

This sequence belongs to the PsbE/PsbF family. In terms of assembly, heterodimer of an alpha subunit and a beta subunit. PSII is composed of 1 copy each of membrane proteins PsbA, PsbB, PsbC, PsbD, PsbE, PsbF, PsbH, PsbI, PsbJ, PsbK, PsbL, PsbM, PsbT, PsbX, PsbY, PsbZ, Psb30/Ycf12, at least 3 peripheral proteins of the oxygen-evolving complex and a large number of cofactors. It forms dimeric complexes. Heme b serves as cofactor.

It localises to the plastid. The protein resides in the chloroplast thylakoid membrane. Functionally, this b-type cytochrome is tightly associated with the reaction center of photosystem II (PSII). PSII is a light-driven water:plastoquinone oxidoreductase that uses light energy to abstract electrons from H(2)O, generating O(2) and a proton gradient subsequently used for ATP formation. It consists of a core antenna complex that captures photons, and an electron transfer chain that converts photonic excitation into a charge separation. This is Cytochrome b559 subunit alpha from Panax ginseng (Korean ginseng).